A 776-amino-acid polypeptide reads, in one-letter code: Acetone carboxylase alpha subunit (776 aa).

In terms of assembly, heterohexamer of two alpha, two beta and two gamma subunits. It depends on Fe cation as a cofactor. The cofactor is Mg(2+). Zn(2+) serves as cofactor. The N-terminus is blocked.

The catalysed reaction is acetone + hydrogencarbonate + 2 ATP + 3 H2O = acetoacetate + 2 AMP + 4 phosphate + 4 H(+). Its function is as follows. Catalyzes the carboxylation of acetone to form acetoacetate. Has a reduced activity on butanone, and no activity on 2-pentatone, 3-pentatone, 2-hexanone, chloroacetone, pyruvate, phosphoenolpyruvate, acetaldehyde, propionaldehyde and propylene oxide. The chain is Acetone carboxylase alpha subunit from Xanthobacter autotrophicus (strain ATCC BAA-1158 / Py2).